The primary structure comprises 30 residues: Cycloviolacin-O4 (30 aa).

Positions 1–30 (GIPCGESCVWIPCISSAIGCSCKNKVCYRN) form a cross-link, cyclopeptide (Gly-Asn). 3 disulfides stabilise this stretch: Cys4–Cys20, Cys8–Cys22, and Cys13–Cys27.

Post-translationally, this is a cyclic peptide. Expressed in petals, petioles, roots and runners but not in leaves (at protein level).

Functionally, probably participates in a plant defense mechanism. The sequence is that of Cycloviolacin-O4 from Viola odorata (Sweet violet).